Reading from the N-terminus, the 180-residue chain is Nucleoside triphosphate/diphosphate phosphatase (180 aa).

R26 (proton donor) is an active-site residue. Mg(2+) is bound by residues N90, D106, D108, D110, D123, and E126.

It belongs to the Ntdp family. Mg(2+) is required as a cofactor.

It catalyses the reaction a ribonucleoside 5'-triphosphate + H2O = a ribonucleoside 5'-diphosphate + phosphate + H(+). The catalysed reaction is a ribonucleoside 5'-diphosphate + H2O = a ribonucleoside 5'-phosphate + phosphate + H(+). Has nucleoside phosphatase activity towards nucleoside triphosphates and nucleoside diphosphates. The polypeptide is Nucleoside triphosphate/diphosphate phosphatase (Staphylococcus epidermidis (strain ATCC 35984 / DSM 28319 / BCRC 17069 / CCUG 31568 / BM 3577 / RP62A)).